Reading from the N-terminus, the 338-residue chain is Anthranilate phosphoribosyltransferase (338 aa).

Residues G81, 84-85 (GD), T89, 91-94 (NIST), 109-117 (KHGNRNLSS), and A121 contribute to the 5-phospho-alpha-D-ribose 1-diphosphate site. G81 is an anthranilate binding site. Position 93 (S93) interacts with Mg(2+). An anthranilate-binding site is contributed by N112. R167 contacts anthranilate. Mg(2+) is bound by residues D226 and E227.

It belongs to the anthranilate phosphoribosyltransferase family. As to quaternary structure, homodimer. The cofactor is Mg(2+).

The enzyme catalyses N-(5-phospho-beta-D-ribosyl)anthranilate + diphosphate = 5-phospho-alpha-D-ribose 1-diphosphate + anthranilate. Its pathway is amino-acid biosynthesis; L-tryptophan biosynthesis; L-tryptophan from chorismate: step 2/5. Functionally, catalyzes the transfer of the phosphoribosyl group of 5-phosphorylribose-1-pyrophosphate (PRPP) to anthranilate to yield N-(5'-phosphoribosyl)-anthranilate (PRA). This chain is Anthranilate phosphoribosyltransferase, found in Cereibacter sphaeroides (strain ATCC 17029 / ATH 2.4.9) (Rhodobacter sphaeroides).